Consider the following 315-residue polypeptide: beta-hydroxyaspartate dehydratase (315 aa).

Lys53 bears the N6-(pyridoxal phosphate)lysine mark. Pyridoxal 5'-phosphate-binding positions include Asn80, 179–183 (GGGGM), and Thr303.

The cofactor is pyridoxal 5'-phosphate.

The catalysed reaction is (3S)-3-hydroxy-D-aspartate = iminosuccinate + H2O. Catalyzes the dehydration of (2R,3S)-beta-hydroxyaspartate ((3S)-3-hydroxy-D-aspartate) into iminosuccinate. Is essential for the growth of P.denitrificans in the presence of glycolate and glyoxylate since it functions in glyoxylate assimilation via the beta-hydroxyaspartate cycle (BHAC). This chain is beta-hydroxyaspartate dehydratase, found in Paracoccus denitrificans (strain Pd 1222).